A 362-amino-acid chain; its full sequence is 4-hydroxytryptamine kinase (362 aa).

ATP-binding positions include asparagine 37, lysine 57, and 118–120 (QDV). Aspartate 224 is an active-site residue. ATP is bound at residue 249-251 (DWE).

Belongs to the methylthioribose kinase family. Monomer. Requires Mg(2+) as cofactor.

The enzyme catalyses 4-hydroxytryptamine + ATP = norbaeocystin + ADP + H(+). It catalyses the reaction psilocin + ATP = psilocybin + ADP + H(+). It carries out the reaction 4-hydroxy-N,N,N-trimethyltryptamine + ATP = aeruginascin + ADP + H(+). Its pathway is secondary metabolite biosynthesis. In terms of biological role, 4-hydroxytryptamine kinase; part of the gene cluster that mediates the biosynthesis of psilocybin, a psychotropic tryptamine-derived natural product. The first step in the pathway is the decarboxylation of L-tryptophan to tryptamine by the decarboxylase psiD. 4-hydroxy-L-tryptophan is accepted as substrate by psiD as well. The cytochrome P450 monooxygenase psiH then converts tryptamine to 4-hydroxytryptamine. The kinase psiK catalyzes the 4-O-phosphorylation step by converting 4-hydroxytryptamine into norbaeocystin. The methyltransferase psiM then catalyzes iterative methyl transfer to the amino group of norbaeocystin to yield psilocybin via a monomethylated intermediate, baeocystin. 4-hydroxy-6-methyl-l-tryptophancan also be converted the decarboxylase PsiD, kinase PsiK, and methyltransferase PsiM into respectively 6-methyl-norbaeocystin, 6-methylbaeocystin, and 6-methylpsilocybin. PsiK kinase can also turn psilocin into psilocybin. This activity may represent a protective mechanism to rephosphorylate the unstable psilocin to the stable psilocybin in case of intracellular ester cleavage. Moreover, psiK is able to O-phosphorylate the quaternary amine 4-hydroxy-N,N,N-trimethyltryptamine (4-OH-TMT) to yield aeruginascin, another bioactive compound found in Psilocybe species. The protein is 4-hydroxytryptamine kinase of Psilocybe cubensis (Psychedelic mushroom).